Reading from the N-terminus, the 209-residue chain is Ribosomal RNA large subunit methyltransferase E (209 aa).

Residues G63, W65, D83, D99, and D124 each coordinate S-adenosyl-L-methionine. Residue K164 is the Proton acceptor of the active site.

This sequence belongs to the class I-like SAM-binding methyltransferase superfamily. RNA methyltransferase RlmE family.

Its subcellular location is the cytoplasm. The catalysed reaction is uridine(2552) in 23S rRNA + S-adenosyl-L-methionine = 2'-O-methyluridine(2552) in 23S rRNA + S-adenosyl-L-homocysteine + H(+). In terms of biological role, specifically methylates the uridine in position 2552 of 23S rRNA at the 2'-O position of the ribose in the fully assembled 50S ribosomal subunit. The polypeptide is Ribosomal RNA large subunit methyltransferase E (Colwellia psychrerythraea (strain 34H / ATCC BAA-681) (Vibrio psychroerythus)).